The sequence spans 151 residues: NADPH-dependent 7-cyano-7-deazaguanine reductase (151 aa).

The Thioimide intermediate role is filled by Cys-51. The active-site Proton donor is the Asp-58. Residues 73-75 and 92-93 each bind substrate; these read VES and HE.

It belongs to the GTP cyclohydrolase I family. QueF type 1 subfamily.

It localises to the cytoplasm. It catalyses the reaction 7-aminomethyl-7-carbaguanine + 2 NADP(+) = 7-cyano-7-deazaguanine + 2 NADPH + 3 H(+). It participates in tRNA modification; tRNA-queuosine biosynthesis. Catalyzes the NADPH-dependent reduction of 7-cyano-7-deazaguanine (preQ0) to 7-aminomethyl-7-deazaguanine (preQ1). The chain is NADPH-dependent 7-cyano-7-deazaguanine reductase from Bacteroides fragilis (strain ATCC 25285 / DSM 2151 / CCUG 4856 / JCM 11019 / LMG 10263 / NCTC 9343 / Onslow / VPI 2553 / EN-2).